We begin with the raw amino-acid sequence, 216 residues long: LexA repressor (216 aa).

A DNA-binding region (H-T-H motif) is located at residues 29–49 (RAEIAQALGFRSPNAAEDHLK). Active-site for autocatalytic cleavage activity residues include Ser-134 and Lys-171.

The protein belongs to the peptidase S24 family. In terms of assembly, homodimer.

It catalyses the reaction Hydrolysis of Ala-|-Gly bond in repressor LexA.. Its function is as follows. Represses a number of genes involved in the response to DNA damage (SOS response), including recA and lexA. In the presence of single-stranded DNA, RecA interacts with LexA causing an autocatalytic cleavage which disrupts the DNA-binding part of LexA, leading to derepression of the SOS regulon and eventually DNA repair. The chain is LexA repressor from Bordetella parapertussis (strain 12822 / ATCC BAA-587 / NCTC 13253).